We begin with the raw amino-acid sequence, 456 residues long: Aminotransferase ALD1, chloroplastic (456 aa).

A chloroplast-targeting transit peptide spans 1–43; the sequence is MVSLMFFSSASPLCSSPSKIPKASLDFEMKKLGGSTKLVRNVN. Pyridoxal 5'-phosphate is bound by residues Y108, 142–143, N223, D251, Y254, S281, S283, R292, and N323; that span reads AQ.

This sequence belongs to the class-I pyridoxal-phosphate-dependent aminotransferase family. LL-diaminopimelate aminotransferase subfamily. Requires pyridoxal 5'-phosphate as cofactor. In terms of tissue distribution, highly expressed in senescing leaves, flowers, siliques and seeds.

The protein localises to the plastid. The protein resides in the chloroplast. In terms of biological role, aminotransferase involved in local and systemic acquired resistance (SAR) to the bacterial pathogen P.syringae. Required for salicylic acid (SA) and camalexin accumulation upon pathogen infection. Possesses aminotransferase activity in vitro and may generate amino-acid-derived defense signals in vivo. May be involved in ethylene-induced senescence signaling. Involved in the biosynthesis of pipecolate (Pip), a metabolite that orchestrates defense amplification, positive regulation of SA biosynthesis, and priming to guarantee effective local resistance induction and the establishment of SAR. Converts lysine to alpha-keto-epsilon-aminocaproate, which then can spontaneously cyclize to form delta-(1)-piperideine-2-carboxylate (P2C). P2C is converted to Pip by SARD4. May produce non-Pip metabolites that play roles in immunity. Involved in the synthesis of distinct metabolite signals that affect basal and early defenses, and later defense responses. The sequence is that of Aminotransferase ALD1, chloroplastic from Arabidopsis thaliana (Mouse-ear cress).